The primary structure comprises 351 residues: Dual-specificity RNA methyltransferase RlmN (351 aa).

Glutamate 90 (proton acceptor) is an active-site residue. Residues 96-330 (EKDHYTACLS…ATLRKSKGSD (235 aa)) enclose the Radical SAM core domain. An intrachain disulfide couples cysteine 103 to cysteine 335. Residues cysteine 110, cysteine 114, and cysteine 117 each coordinate [4Fe-4S] cluster. S-adenosyl-L-methionine contacts are provided by residues 162 to 163 (GE), serine 194, 216 to 218 (SLH), and asparagine 292. The active-site S-methylcysteine intermediate is cysteine 335.

The protein belongs to the radical SAM superfamily. RlmN family. It depends on [4Fe-4S] cluster as a cofactor.

It is found in the cytoplasm. It catalyses the reaction adenosine(2503) in 23S rRNA + 2 reduced [2Fe-2S]-[ferredoxin] + 2 S-adenosyl-L-methionine = 2-methyladenosine(2503) in 23S rRNA + 5'-deoxyadenosine + L-methionine + 2 oxidized [2Fe-2S]-[ferredoxin] + S-adenosyl-L-homocysteine. The catalysed reaction is adenosine(37) in tRNA + 2 reduced [2Fe-2S]-[ferredoxin] + 2 S-adenosyl-L-methionine = 2-methyladenosine(37) in tRNA + 5'-deoxyadenosine + L-methionine + 2 oxidized [2Fe-2S]-[ferredoxin] + S-adenosyl-L-homocysteine. Specifically methylates position 2 of adenine 2503 in 23S rRNA and position 2 of adenine 37 in tRNAs. m2A2503 modification seems to play a crucial role in the proofreading step occurring at the peptidyl transferase center and thus would serve to optimize ribosomal fidelity. This is Dual-specificity RNA methyltransferase RlmN from Solidesulfovibrio magneticus (strain ATCC 700980 / DSM 13731 / RS-1) (Desulfovibrio magneticus).